Here is a 971-residue protein sequence, read N- to C-terminus: 116 kDa U5 small nuclear ribonucleoprotein component (971 aa).

An N-acetylmethionine modification is found at methionine 1. A disordered region spans residues 1–52; it reads MDTDLYDEFGNYIGPELDSDEDDDELGRETKDLDEDEDEDEDDVGEHEDDHP. Residues 17–47 show a composition bias toward acidic residues; the sequence is LDSDEDDDELGRETKDLDEDEDEDEDDVGEH. Serine 19 bears the Phosphoserine mark. Lysine 63 participates in a covalent cross-link: Glycyl lysine isopeptide (Lys-Gly) (interchain with G-Cter in SUMO1); alternate. Residue lysine 63 forms a Glycyl lysine isopeptide (Lys-Gly) (interchain with G-Cter in SUMO2); alternate linkage. Residue threonine 85 is modified to Phosphothreonine. Residues 126-408 enclose the tr-type G domain; the sequence is ELIRNVTLCG…GIHLTKEELK (283 aa). Residues 135-142, 203-207, and 257-260 contribute to the GTP site; these read GHLHHGKT, DTPGH, and NKID.

Belongs to the TRAFAC class translation factor GTPase superfamily. Classic translation factor GTPase family. EF-G/EF-2 subfamily. In terms of assembly, component of the U5 snRNP and the U4/U6-U5 tri-snRNP complex, a building block of the spliceosome. The U4/U6-U5 tri-snRNP complex is composed of the U4, U6 and U5 snRNAs and at least PRPF3, PRPF4, PRPF6, PRPF8, PRPF31, SNRNP200, TXNL4A, SNRNP40, DDX23, CD2BP2, PPIH, SNU13, EFTUD2, SART1 and USP39. Component of the pre-catalytic, catalytic and post-catalytic spliceosome complexes. Component of the minor spliceosome, which splices U12-type introns. Within this complex, interacts with CRIPT. Interacts with ERBB4 and PRPF8. Interacts with PIH1D1. Interacts with RPAP3 and URI1 in a ZNHIT2-dependent manner. Interacts with NRDE2. Interacts with FAM50A. Interacts with UBL5.

It localises to the nucleus. Its function is as follows. Required for pre-mRNA splicing as component of the spliceosome, including pre-catalytic, catalytic and post-catalytic spliceosomal complexes. Component of the U5 snRNP and the U4/U6-U5 tri-snRNP complex, a building block of the spliceosome. As a component of the minor spliceosome, involved in the splicing of U12-type introns in pre-mRNAs. The sequence is that of 116 kDa U5 small nuclear ribonucleoprotein component (Eftud2) from Mus musculus (Mouse).